Reading from the N-terminus, the 63-residue chain is MNNKINNIKITQVQSAIGRKYDQRLILVGLGLNKINKSVILANTNSIKGMVEKVKHLLKIENM.

It belongs to the universal ribosomal protein uL30 family. As to quaternary structure, part of the 50S ribosomal subunit.

The polypeptide is Large ribosomal subunit protein uL30 (Rickettsia massiliae (strain Mtu5)).